The primary structure comprises 85 residues: Large ribosomal subunit protein bL27 (85 aa).

Residues 1–23 (MAHKKAGGSTRNGRDSESKRLGV) are disordered.

This sequence belongs to the bacterial ribosomal protein bL27 family.

This Thioalkalivibrio sulfidiphilus (strain HL-EbGR7) protein is Large ribosomal subunit protein bL27.